Reading from the N-terminus, the 196-residue chain is Ribosome maturation factor RimP (196 aa).

The interval 164–196 (LAPQKPNKPGPKKPGHDKKKPSNEPAAGKPRAE) is disordered. Over residues 173-182 (GPKKPGHDKK) the composition is skewed to basic residues.

The protein belongs to the RimP family.

The protein resides in the cytoplasm. Its function is as follows. Required for maturation of 30S ribosomal subunits. This Xanthomonas campestris pv. campestris (strain B100) protein is Ribosome maturation factor RimP.